The following is a 181-amino-acid chain: Large ribosomal subunit protein bL17 (181 aa).

A compositionally biased stretch (low complexity) spans 141–159 (KAASATAESAPVATANDAA). The segment at 141 to 181 (KAASATAESAPVATANDAAPAEEAEVQGVKDPAEDCEAKAD) is disordered. Over residues 171–181 (DPAEDCEAKAD) the composition is skewed to basic and acidic residues.

This sequence belongs to the bacterial ribosomal protein bL17 family. As to quaternary structure, part of the 50S ribosomal subunit. Contacts protein L32.

This chain is Large ribosomal subunit protein bL17, found in Geotalea daltonii (strain DSM 22248 / JCM 15807 / FRC-32) (Geobacter daltonii).